The sequence spans 359 residues: MIALPQDRMDQLLKRFSMIESQMANNPDSDTYVKLASEYSELQDVVGKIRELSDARMEASDLAAMRDDASTDAEMRALAVEELPEVEKRIAVLEQDVQILLLPKDAADDKNAILEIRAGTGGLEATLFAGDLFRMYERYAAEKGWRVELVSASEGDAGGYKEIIATVSGKGVFSKLKFESGVHRVQRVPETEAGGRIHTSAATVAVLPEAEDIDIEIRNEDIRIDTMRASGAGGQHVNTTDSAVRITHIPTGIMVVQAEKSQHQNRARAMQILRARLYDMERQKAESERSQARRSQVGSGDRSERIRTYNFPQGRVTDHRINLTLYKLDRVMEGDLDELVDALISDHQTALLAELGEQP.

Gln-235 is modified (N5-methylglutamine). Positions 283–309 (QKAESERSQARRSQVGSGDRSERIRTY) are disordered.

The protein belongs to the prokaryotic/mitochondrial release factor family. Post-translationally, methylated by PrmC. Methylation increases the termination efficiency of RF1.

Its subcellular location is the cytoplasm. In terms of biological role, peptide chain release factor 1 directs the termination of translation in response to the peptide chain termination codons UAG and UAA. This is Peptide chain release factor 1 from Brucella abortus (strain S19).